The chain runs to 501 residues: Cytochrome P450 3A31 (501 aa).

Cysteine 440 serves as a coordination point for heme.

Belongs to the cytochrome P450 family. Requires heme as cofactor. Expressed constitutively in liver.

Its subcellular location is the endoplasmic reticulum membrane. The protein resides in the microsome membrane. It carries out the reaction an organic molecule + reduced [NADPH--hemoprotein reductase] + O2 = an alcohol + oxidized [NADPH--hemoprotein reductase] + H2O + H(+). Its function is as follows. Cytochromes P450 are a group of heme-thiolate monooxygenases. In liver microsomes, this enzyme is involved in an NADPH-dependent electron transport pathway. It oxidizes a variety of structurally unrelated compounds, including steroids, fatty acids, and xenobiotics. This Mesocricetus auratus (Golden hamster) protein is Cytochrome P450 3A31 (CYP3A31).